The chain runs to 595 residues: DNA mismatch repair protein MutL (595 aa).

Belongs to the DNA mismatch repair MutL/HexB family.

Its function is as follows. This protein is involved in the repair of mismatches in DNA. It is required for dam-dependent methyl-directed DNA mismatch repair. May act as a 'molecular matchmaker', a protein that promotes the formation of a stable complex between two or more DNA-binding proteins in an ATP-dependent manner without itself being part of a final effector complex. In Endomicrobium trichonymphae, this protein is DNA mismatch repair protein MutL.